We begin with the raw amino-acid sequence, 214 residues long: Alpha-S1-casein (214 aa).

A signal peptide spans 1–15; sequence MKLLILTCLVAVALA. The segment at 59 to 91 is disordered; that stretch reads IGSESTEDQAMEDAKQMKAGSSSSSEEIVPNSA. Residues serine 61, serine 63, serine 79, serine 80, serine 81, serine 82, serine 83, serine 90, and serine 130 each carry the phosphoserine modification.

This sequence belongs to the alpha-casein family. In terms of tissue distribution, mammary gland specific. Secreted in milk.

It localises to the secreted. Important role in the capacity of milk to transport calcium phosphate. This Capra hircus (Goat) protein is Alpha-S1-casein (CSN1S1).